Here is a 397-residue protein sequence, read N- to C-terminus: P2X purinoceptor 3 (397 aa).

Topologically, residues 1–20 (MNCISDFFTYETTKSVVVKS) are cytoplasmic. A helical membrane pass occupies residues 21 to 43 (WTIGIINRVVQLLIISYFVGWVF). Residues 44-322 (LHEKAYQVRD…AGKFNIIPTI (279 aa)) lie on the Extracellular side of the membrane. ATP contacts are provided by Lys63 and Lys65. 3 disulfides stabilise this stretch: Cys107–Cys153, Cys116–Cys137, and Cys122–Cys147. Glu111 contributes to the Mg(2+) binding site. A glycan (N-linked (GlcNAc...) asparagine) is linked at Asn139. Mg(2+) is bound at residue Asp158. Asp158 provides a ligand contact to Ca(2+). Asn170 is a glycosylation site (N-linked (GlcNAc...) asparagine). Thr172 is a binding site for ATP. The N-linked (GlcNAc...) asparagine glycan is linked to Asn194. Intrachain disulfides connect Cys203–Cys213 and Cys247–Cys256. Positions 275, 279, and 281 each coordinate ATP. N-linked (GlcNAc...) asparagine glycosylation is present at Asn290. Position 299 (Lys299) interacts with ATP. Residues 323–341 (ISSVAAFTSVGVGTVLCDI) form a helical membrane-spanning segment. Residues 342–397 (ILLNFLKGADQYKAKKFEEVNETTLKIAALTNPVYPSDQTTAEKQSTDSGAFSIGH) are Cytoplasmic-facing. Residues 378 to 391 (SDQTTAEKQSTDSG) are compositionally biased toward polar residues. Residues 378–397 (SDQTTAEKQSTDSGAFSIGH) are disordered.

This sequence belongs to the P2X receptor family. As to quaternary structure, homotrimer. Forms heterotrimer with P2RX2. Heterotrimeric P2RX2/3 has a ligand dose-response profile that is distinct from either homotrimeric P2RX2 or P2RX3.

Its subcellular location is the cell membrane. It carries out the reaction Ca(2+)(in) = Ca(2+)(out). The catalysed reaction is Na(+)(in) = Na(+)(out). Its activity is regulated as follows. Has high sensitivity to ATP. Fast activation by external ATP. Exhibits rapid desensitization. Sensitives to the ATP agonist:alpha/beta-methylene-ATP. Subject to allosteric inhibition by AF-219. Mg(2+) and Ca(2+) slow deactivation of P2RX3. Functionally, extracellular ATP-activated non-selective cation channel. Plays particularly important role in sensory neurons where its activation is critical for gustatory, nociceptive responses, visceral reflexes and sensory hypersensitization. This is P2X purinoceptor 3 (P2RX3) from Homo sapiens (Human).